Reading from the N-terminus, the 342-residue chain is Polycomb group RING finger protein 2 (342 aa).

The RING-type zinc-finger motif lies at 18 to 57 (CALCGGYFIDATTIVECLHSFCKTCIVRYLETNKYCPMCD). Residues lysine 51 and lysine 88 each participate in a glycyl lysine isopeptide (Lys-Gly) (interchain with G-Cter in SUMO2) cross-link. The Nuclear localization signal motif lies at 81–95 (KLVPGLFKDEMKRRR). Threonine 237 bears the Phosphothreonine; by PKA mark. The disordered stretch occupies residues 237-342 (TLPTVPTPSE…MTVNGAPCPP (106 aa)). Residues 243–253 (TPSEGTNTSGA) show a composition bias toward polar residues. Residues 263–318 (APSPATLPATSSSLPSPATPSHGSPSSHGPPATHPTSPTPPSTAAGTTTATNGGTS) show a composition bias toward low complexity. The segment covering 319–328 (NCLQTPSSTS) has biased composition (polar residues). A Phosphothreonine; by PKA modification is found at threonine 334.

As to quaternary structure, exists as both a monomer and homodimer. Component of a PRC1-like complex. Interacts with CBX8, RING1 and RNF2. Interacts with CBX7. Interacts with PHC2. In terms of processing, phosphorylated. Homodimer formation is regulated by phosphorylation with only unphosphorylated proteins forming homodimers. Expressed in embryonic stem cells. Expressed in a variety of tumor cells and in neural tissues.

It localises to the nucleus. Transcriptional repressor. Binds specifically to the DNA sequence 5'-GACTNGACT-3'. Has tumor suppressor activity. May play a role in control of cell proliferation and/or neural cell development. Regulates proliferation of early T progenitor cells by maintaining expression of HES1. Also plays a role in antero-posterior specification of the axial skeleton and negative regulation of the self-renewal activity of hematopoietic stem cells. Component of a Polycomb group (PcG) multiprotein PRC1-like complex, a complex class required to maintain the transcriptionally repressive state of many genes, including Hox genes, throughout development. PcG PRC1 complex acts via chromatin remodeling and modification of histones; it mediates monoubiquitination of histone H2A 'Lys-119', rendering chromatin heritably changed in its expressibility. Within the PRC1-like complex, regulates RNF2 ubiquitin ligase activity. The polypeptide is Polycomb group RING finger protein 2 (Pcgf2) (Mus musculus (Mouse)).